Consider the following 261-residue polypeptide: Small ribosomal subunit protein uS2 (261 aa).

The segment at 224–261 is disordered; that stretch reads GKQGQDDSEDVEKEMADKAAAENDDEESIEEVVEKSED. Over residues 245-254 the composition is skewed to acidic residues; the sequence is ENDDEESIEE.

It belongs to the universal ribosomal protein uS2 family.

The polypeptide is Small ribosomal subunit protein uS2 (Lactobacillus gasseri (strain ATCC 33323 / DSM 20243 / BCRC 14619 / CIP 102991 / JCM 1131 / KCTC 3163 / NCIMB 11718 / NCTC 13722 / AM63)).